Here is a 334-residue protein sequence, read N- to C-terminus: Protein-methionine-sulfoxide reductase catalytic subunit MsrP (334 aa).

The segment at residues 1–44 is a signal peptide (tat-type signal); sequence MKKNQFLKESDVTAESVFFMKRRQVLKALGISAAALSLPHAAHA. Residues Asn88, 91–92, Cys146, Thr181, Asn233, Arg238, and 249–251 each bind Mo-molybdopterin; these read YE and GIK.

The protein belongs to the MsrP family. In terms of assembly, heterodimer of a catalytic subunit (MsrP) and a heme-binding subunit (MsrQ). The cofactor is Mo-molybdopterin. In terms of processing, predicted to be exported by the Tat system. The position of the signal peptide cleavage has not been experimentally proven.

The protein localises to the periplasm. It catalyses the reaction L-methionyl-[protein] + a quinone + H2O = L-methionyl-(S)-S-oxide-[protein] + a quinol. It carries out the reaction L-methionyl-[protein] + a quinone + H2O = L-methionyl-(R)-S-oxide-[protein] + a quinol. Functionally, part of the MsrPQ system that repairs oxidized periplasmic proteins containing methionine sulfoxide residues (Met-O), using respiratory chain electrons. Thus protects these proteins from oxidative-stress damage caused by reactive species of oxygen and chlorine generated by the host defense mechanisms. MsrPQ is essential for the maintenance of envelope integrity under bleach stress, rescuing a wide series of structurally unrelated periplasmic proteins from methionine oxidation, including the primary periplasmic chaperone SurA and the lipoprotein Pal. The catalytic subunit MsrP is non-stereospecific, being able to reduce both (R-) and (S-) diastereoisomers of methionine sulfoxide. This is Protein-methionine-sulfoxide reductase catalytic subunit MsrP from Escherichia coli O157:H7.